An 83-amino-acid polypeptide reads, in one-letter code: Cytochrome b559 subunit alpha (83 aa).

The chain crosses the membrane as a helical span at residues 21–35 (VIHSITIPSLFIAGW). His-23 is a heme binding site.

The protein belongs to the PsbE/PsbF family. In terms of assembly, heterodimer of an alpha subunit and a beta subunit. PSII is composed of 1 copy each of membrane proteins PsbA, PsbB, PsbC, PsbD, PsbE, PsbF, PsbH, PsbI, PsbJ, PsbK, PsbL, PsbM, PsbT, PsbX, PsbY, PsbZ, Psb30/Ycf12, at least 3 peripheral proteins of the oxygen-evolving complex and a large number of cofactors. It forms dimeric complexes. It depends on heme b as a cofactor.

Its subcellular location is the plastid. The protein localises to the chloroplast thylakoid membrane. Its function is as follows. This b-type cytochrome is tightly associated with the reaction center of photosystem II (PSII). PSII is a light-driven water:plastoquinone oxidoreductase that uses light energy to abstract electrons from H(2)O, generating O(2) and a proton gradient subsequently used for ATP formation. It consists of a core antenna complex that captures photons, and an electron transfer chain that converts photonic excitation into a charge separation. This is Cytochrome b559 subunit alpha from Helianthus annuus (Common sunflower).